Consider the following 243-residue polypeptide: PF03932 family protein CutC (243 aa).

This sequence belongs to the CutC family.

It is found in the cytoplasm. The polypeptide is PF03932 family protein CutC (Glaesserella parasuis serovar 5 (strain SH0165) (Haemophilus parasuis)).